A 179-amino-acid chain; its full sequence is MSSRVLTPDVVGIDALVHDHQTVLAKAEGGVVAVFANNAPAFYAITPARLAELLALEEKLARPGSDVALDDQLYQEPQTAPVAVPMGKFAMYPDWQPDADFIRLAALWGVALREPVTAEELASFIAYWQAEGKVFHHVQWQQKLARSLQIGRASNGGLPKRDVNTVSEPDSQIPPGFRG.

A disordered region spans residues 156-179 (GGLPKRDVNTVSEPDSQIPPGFRG).

The protein belongs to the DnaT family. As to quaternary structure, homooligomerizes. Interacts with PriB. Component of the replication restart primosome. Primosome assembly occurs via a 'hand-off' mechanism. PriA binds to replication forks, subsequently PriB then DnaT bind; DnaT then displaces ssDNA to generate the helicase loading substrate.

In terms of biological role, involved in the restart of stalled replication forks, which reloads the replicative helicase on sites other than the origin of replication. Can function in multiple replication restart pathways. Displaces ssDNA from a PriB-ssDNA complex. Probably forms a spiral filament on ssDNA. This is Replication restart protein DnaT from Escherichia coli O7:K1 (strain IAI39 / ExPEC).